The following is a 190-amino-acid chain: Thymidylate kinase (190 aa).

7 to 14 (GVDTCGKS) serves as a coordination point for ATP.

It belongs to the thymidylate kinase family.

The catalysed reaction is dTMP + ATP = dTDP + ADP. Functionally, phosphorylation of dTMP to form dTDP in both de novo and salvage pathways of dTTP synthesis. The chain is Thymidylate kinase from Wolinella succinogenes (strain ATCC 29543 / DSM 1740 / CCUG 13145 / JCM 31913 / LMG 7466 / NCTC 11488 / FDC 602W) (Vibrio succinogenes).